Consider the following 338-residue polypeptide: Heme A synthase (338 aa).

5 consecutive transmembrane segments (helical) span residues 6–26 (ITKW…IGGI), 93–113 (GRIT…KGII), 118–138 (IAPY…GWYM), 154–174 (LAFH…QLIK), and 201–221 (VIYL…GLIY). His256 contributes to the heme binding site. 3 helical membrane passes run 258–278 (LGGY…LKIE), 285–305 (IAYF…ITLL), and 308–328 (VPII…SVII). His316 provides a ligand contact to heme.

This sequence belongs to the COX15/CtaA family. Type 2 subfamily. Interacts with CtaB. Heme b is required as a cofactor.

The protein localises to the cell membrane. The enzyme catalyses Fe(II)-heme o + 2 A + H2O = Fe(II)-heme a + 2 AH2. The protein operates within porphyrin-containing compound metabolism; heme A biosynthesis; heme A from heme O: step 1/1. In terms of biological role, catalyzes the conversion of heme O to heme A by two successive hydroxylations of the methyl group at C8. The first hydroxylation forms heme I, the second hydroxylation results in an unstable dihydroxymethyl group, which spontaneously dehydrates, resulting in the formyl group of heme A. This chain is Heme A synthase, found in Rickettsia canadensis (strain McKiel).